Consider the following 357-residue polypeptide: S-adenosylmethionine:tRNA ribosyltransferase-isomerase (357 aa).

The protein belongs to the QueA family. In terms of assembly, monomer.

Its subcellular location is the cytoplasm. It carries out the reaction 7-aminomethyl-7-carbaguanosine(34) in tRNA + S-adenosyl-L-methionine = epoxyqueuosine(34) in tRNA + adenine + L-methionine + 2 H(+). It participates in tRNA modification; tRNA-queuosine biosynthesis. Functionally, transfers and isomerizes the ribose moiety from AdoMet to the 7-aminomethyl group of 7-deazaguanine (preQ1-tRNA) to give epoxyqueuosine (oQ-tRNA). This is S-adenosylmethionine:tRNA ribosyltransferase-isomerase from Edwardsiella ictaluri (strain 93-146).